We begin with the raw amino-acid sequence, 110 residues long: Large ribosomal subunit protein uL22 (110 aa).

It belongs to the universal ribosomal protein uL22 family. In terms of assembly, part of the 50S ribosomal subunit.

In terms of biological role, this protein binds specifically to 23S rRNA; its binding is stimulated by other ribosomal proteins, e.g. L4, L17, and L20. It is important during the early stages of 50S assembly. It makes multiple contacts with different domains of the 23S rRNA in the assembled 50S subunit and ribosome. Functionally, the globular domain of the protein is located near the polypeptide exit tunnel on the outside of the subunit, while an extended beta-hairpin is found that lines the wall of the exit tunnel in the center of the 70S ribosome. This is Large ribosomal subunit protein uL22 from Geobacter metallireducens (strain ATCC 53774 / DSM 7210 / GS-15).